Here is a 335-residue protein sequence, read N- to C-terminus: Meiotic expression up-regulated protein 14 (335 aa).

It localises to the cytoplasm. Its subcellular location is the cytoskeleton. The protein resides in the microtubule organizing center. It is found in the spindle pole body. The protein localises to the nucleus membrane. It localises to the prospore membrane. Its function is as follows. Has a role in nuclear division during meiosis II where it stabilizes the proper segregation of the spindle pole bodies. Also has a role in the formation and extension of the forespore membrane. The chain is Meiotic expression up-regulated protein 14 (meu14) from Schizosaccharomyces pombe (strain 972 / ATCC 24843) (Fission yeast).